The following is a 188-amino-acid chain: Ion-translocating oxidoreductase complex subunit B (188 aa).

Residues 1–26 (MMSLWIAIGALSTLALVSGVVLGFAA) are hydrophobic. Positions 32-91 (DEDPVVEQVDAILPQSQCGQCGYPGCRPYAEAVSTGGEKINKCAPGGEQVMLKLAELLAV) constitute a 4Fe-4S domain. Positions 49, 52, 57, 74, 117, 120, 123, 127, 147, 150, 153, and 157 each coordinate [4Fe-4S] cluster. 4Fe-4S ferredoxin-type domains are found at residues 108–137 (KVAFIDEANCIGCTKCIQACPVDAIIGATR) and 138–167 (AMHTVLSDLCTGCDLCVAPCPTDCIEMIPV).

It belongs to the 4Fe4S bacterial-type ferredoxin family. RnfB subfamily. In terms of assembly, the complex is composed of six subunits: RnfA, RnfB, RnfC, RnfD, RnfE and RnfG. It depends on [4Fe-4S] cluster as a cofactor.

It localises to the cell inner membrane. Its function is as follows. Part of a membrane-bound complex that couples electron transfer with translocation of ions across the membrane. The chain is Ion-translocating oxidoreductase complex subunit B from Yersinia pestis bv. Antiqua (strain Antiqua).